Here is a 367-residue protein sequence, read N- to C-terminus: Serine O-succinyltransferase (367 aa).

In terms of domain architecture, AB hydrolase-1 spans 41–351 (NAVLILTGLS…SPQGHDAFLV (311 aa)). The important for substrate specificity stretch occupies residues 48–51 (GLSP). The active-site Nucleophile is Ser146. Arg215 is a binding site for substrate. Catalysis depends on residues Asp313 and His346. Asp347 serves as a coordination point for substrate.

This sequence belongs to the AB hydrolase superfamily. MetX family. In terms of assembly, homodimer.

It is found in the cytoplasm. The catalysed reaction is succinyl-CoA + L-serine = O-succinyl-L-serine + CoA. The enzyme catalyses L-homoserine + succinyl-CoA = O-succinyl-L-homoserine + CoA. It functions in the pathway amino-acid biosynthesis; L-cysteine biosynthesis; L-cysteine from L-serine: step 1/2. Transfers a succinyl group from succinyl-CoA to L-serine, forming succinyl-L-serine. In vitro, also has homoserine succinyl transferase activity. The polypeptide is Serine O-succinyltransferase (Frateuria aurantia (strain ATCC 33424 / DSM 6220 / KCTC 2777 / LMG 1558 / NBRC 3245 / NCIMB 13370) (Acetobacter aurantius)).